The following is a 160-amino-acid chain: Bcl-2-like gene 16 protein (160 aa).

The short motif at 64–84 (LLTTEHTTNWGKVVAMLSFSA) is the BH1 element.

Belongs to the Bcl-2 family.

This chain is Bcl-2-like gene 16 protein (16), found in Saimiri sciureus (Common squirrel monkey).